A 285-amino-acid chain; its full sequence is MKLCGFDVGLDRRFFLIAGPCVVESEQLQMDVAGHLKEITAALGIHFIFKSSYDKANRSSGASFRGPGMDKGLEILAKVKKDLQVPILTDVHTESEIPAVSQVVDVLQTPAFLCRQTDFIRAVAQSGRPVNIKKGQFLAPHDMKNVIDKARAAAKEAGLPEDSFMACERGASFGYNNLVSDMRSLSIMRETGAPVVFDATHSVQLPGGNGTSSGGMREMVPVLSRAAVAVGVAGLFMETHPNPPCALSDGPNAVPLKHMKALLETLVALDDVTKKNGFLENDFGV.

This sequence belongs to the KdsA family.

The protein resides in the cytoplasm. It catalyses the reaction D-arabinose 5-phosphate + phosphoenolpyruvate + H2O = 3-deoxy-alpha-D-manno-2-octulosonate-8-phosphate + phosphate. It participates in carbohydrate biosynthesis; 3-deoxy-D-manno-octulosonate biosynthesis; 3-deoxy-D-manno-octulosonate from D-ribulose 5-phosphate: step 2/3. It functions in the pathway bacterial outer membrane biogenesis; lipopolysaccharide biosynthesis. This Delftia acidovorans (strain DSM 14801 / SPH-1) protein is 2-dehydro-3-deoxyphosphooctonate aldolase.